The following is a 640-amino-acid chain: 1-deoxy-D-xylulose-5-phosphate synthase (640 aa).

Residues His-77 and 118-120 (AHA) contribute to the thiamine diphosphate site. Asp-149 is a binding site for Mg(2+). Thiamine diphosphate-binding positions include 150–151 (GS), Asn-178, Tyr-287, and Glu-369. Mg(2+) is bound at residue Asn-178.

It belongs to the transketolase family. DXPS subfamily. Homodimer. Mg(2+) is required as a cofactor. It depends on thiamine diphosphate as a cofactor.

It catalyses the reaction D-glyceraldehyde 3-phosphate + pyruvate + H(+) = 1-deoxy-D-xylulose 5-phosphate + CO2. Its pathway is metabolic intermediate biosynthesis; 1-deoxy-D-xylulose 5-phosphate biosynthesis; 1-deoxy-D-xylulose 5-phosphate from D-glyceraldehyde 3-phosphate and pyruvate: step 1/1. Functionally, catalyzes the acyloin condensation reaction between C atoms 2 and 3 of pyruvate and glyceraldehyde 3-phosphate to yield 1-deoxy-D-xylulose-5-phosphate (DXP). The polypeptide is 1-deoxy-D-xylulose-5-phosphate synthase (Caulobacter vibrioides (strain NA1000 / CB15N) (Caulobacter crescentus)).